A 461-amino-acid chain; its full sequence is Photosystem II CP43 reaction center protein (461 aa).

The propeptide occupies 1-2 (ME). Residue T3 is modified to N-acetylthreonine. T3 bears the Phosphothreonine mark. 5 consecutive transmembrane segments (helical) span residues 57-81 (LFEV…PHLA), 122-143 (LLGP…KDRN), 166-188 (KALY…RKIT), 243-263 (KPFA…LSYS), and 279-300 (WFNN…ASQA). A [CaMn4O5] cluster-binding site is contributed by E355. A helical transmembrane segment spans residues 435–459 (RARAAAAGFEKGIDRDFEPVLSMTP).

The protein belongs to the PsbB/PsbC family. PsbC subfamily. In terms of assembly, PSII is composed of 1 copy each of membrane proteins PsbA, PsbB, PsbC, PsbD, PsbE, PsbF, PsbH, PsbI, PsbJ, PsbK, PsbL, PsbM, PsbT, PsbX, PsbY, PsbZ, Psb30/Ycf12, at least 3 peripheral proteins of the oxygen-evolving complex and a large number of cofactors. It forms dimeric complexes. Binds multiple chlorophylls and provides some of the ligands for the Ca-4Mn-5O cluster of the oxygen-evolving complex. It may also provide a ligand for a Cl- that is required for oxygen evolution. PSII binds additional chlorophylls, carotenoids and specific lipids. is required as a cofactor.

The protein localises to the plastid. It is found in the chloroplast thylakoid membrane. One of the components of the core complex of photosystem II (PSII). It binds chlorophyll and helps catalyze the primary light-induced photochemical processes of PSII. PSII is a light-driven water:plastoquinone oxidoreductase, using light energy to abstract electrons from H(2)O, generating O(2) and a proton gradient subsequently used for ATP formation. This is Photosystem II CP43 reaction center protein from Nicotiana sylvestris (Wood tobacco).